Reading from the N-terminus, the 72-residue chain is SRY-related protein AES4 (72 aa).

The HMG box DNA-binding region spans Val-1–Lys-69.

The protein resides in the nucleus. The protein is SRY-related protein AES4 of Alligator mississippiensis (American alligator).